We begin with the raw amino-acid sequence, 184 residues long: ATP synthase subunit b 1 (184 aa).

The chain crosses the membrane as a helical span at residues 4–24; it reads LSILAVLAASPAMAATGPFLS.

It belongs to the ATPase B chain family. F-type ATPases have 2 components, F(1) - the catalytic core - and F(0) - the membrane proton channel. F(1) has five subunits: alpha(3), beta(3), gamma(1), delta(1), epsilon(1). F(0) has three main subunits: a(1), b(2) and c(10-14). The alpha and beta chains form an alternating ring which encloses part of the gamma chain. F(1) is attached to F(0) by a central stalk formed by the gamma and epsilon chains, while a peripheral stalk is formed by the delta and b chains.

The protein resides in the cell inner membrane. Its function is as follows. F(1)F(0) ATP synthase produces ATP from ADP in the presence of a proton or sodium gradient. F-type ATPases consist of two structural domains, F(1) containing the extramembraneous catalytic core and F(0) containing the membrane proton channel, linked together by a central stalk and a peripheral stalk. During catalysis, ATP synthesis in the catalytic domain of F(1) is coupled via a rotary mechanism of the central stalk subunits to proton translocation. Component of the F(0) channel, it forms part of the peripheral stalk, linking F(1) to F(0). This is ATP synthase subunit b 1 from Cereibacter sphaeroides (strain ATCC 17023 / DSM 158 / JCM 6121 / CCUG 31486 / LMG 2827 / NBRC 12203 / NCIMB 8253 / ATH 2.4.1.) (Rhodobacter sphaeroides).